Consider the following 59-residue polypeptide: Large ribosomal subunit protein bL32 (59 aa).

Positions 1–16 (MAVPKRKTSPSKRGMR) are enriched in basic residues. The disordered stretch occupies residues 1–41 (MAVPKRKTSPSKRGMRRSADALKAPTYIEDKNSGELRRPHH). Over residues 28 to 41 (IEDKNSGELRRPHH) the composition is skewed to basic and acidic residues.

Belongs to the bacterial ribosomal protein bL32 family.

In Bartonella henselae (strain ATCC 49882 / DSM 28221 / CCUG 30454 / Houston 1) (Rochalimaea henselae), this protein is Large ribosomal subunit protein bL32.